Here is a 150-residue protein sequence, read N- to C-terminus: FCS-Like Zinc finger 15 (150 aa).

A compositionally biased stretch (low complexity) spans 12 to 28 (NNNNNNNNNNNNNNNKN). The interval 12-31 (NNNNNNNNNNNNNNNKNPLS) is disordered. An FLZ-type zinc finger spans residues 67 to 111 (GFLEHCFLCRRKLLPAKDIYMYKGDRAFCSVECRSKQMIMDEEES). The tract at residues 129-150 (SPATAPSRYRRDPRNQAGGFAY) is disordered.

Belongs to the FLZ family. Interacts with KIN10 and KIN11 via its FLZ-type zinc finger domain. Interacts with KINB1 and KINB3 via its N-terminal part. Forms homodimer and heterodimer with FLZ1, FLZ2 and FLZ7 in vitro.

It localises to the cytoplasm. Its subcellular location is the P-body. Its function is as follows. May act as an adapter to facilitate the interaction of SnRK1 complex with effector proteins, conferring tissue- and stimulus-type specific differences in the SnRK1 regulation pathway. This chain is FCS-Like Zinc finger 15, found in Arabidopsis thaliana (Mouse-ear cress).